The chain runs to 300 residues: Ribonuclease HIII (300 aa).

An RNase H type-2 domain is found at 86–300 (RSRIGVDESG…FNEVLGSGNQ (215 aa)). Residues Asp92, Glu93, and Asp196 each coordinate a divalent metal cation.

This sequence belongs to the RNase HII family. RnhC subfamily. Requires Mn(2+) as cofactor. The cofactor is Mg(2+).

The protein resides in the cytoplasm. The enzyme catalyses Endonucleolytic cleavage to 5'-phosphomonoester.. Endonuclease that specifically degrades the RNA of RNA-DNA hybrids. This is Ribonuclease HIII from Chlamydia trachomatis serovar L2 (strain ATCC VR-902B / DSM 19102 / 434/Bu).